The primary structure comprises 522 residues: Semenogelin-2 (522 aa).

The signal sequence occupies residues 1 to 23; the sequence is MKSIILFVLSLLLILEKQAAVMG. 4 disordered regions span residues 26–62, 132–158, 272–358, and 379–522; these read CGSK…SKGS, GGQA…ISSQ, NLNQ…ERHL, and EEQI…PVST. Polar residues-rich tracts occupy residues 31 to 40 and 137 to 158; these read QLPSGSSQFP and RGTQ…ISSQ. A compositionally biased stretch (basic and acidic residues) spans 292–310; sequence RTEERQLNRGEKSVQKDVS. Over residues 325–335 the composition is skewed to polar residues; that stretch reads KSQNQVTIHSQ. Over residues 336-345 the composition is skewed to basic and acidic residues; the sequence is GQEHGHKENK. 3 stretches are compositionally biased toward polar residues: residues 379–397, 427–436, and 446–464; these read EEQI…SQAQ, KDVSQSSTSF, and SQIQ…QNAK. Basic and acidic residues-rich tracts occupy residues 465–492 and 499–522; these read GKSD…ESSE and TEHE…PVST.

Belongs to the semenogelin family. In terms of assembly, interacts with SERPINA5.

It is found in the secreted. Functionally, participates in the formation of a gel matrix (sperm coagulum) entrapping the accessory gland secretions and ejaculated spermatozoa. The sequence is that of Semenogelin-2 (SEMG2) from Hylobates klossii (Kloss's gibbon).